A 431-amino-acid chain; its full sequence is Enolase (431 aa).

Gln168 contributes to the (2R)-2-phosphoglycerate binding site. Glu210 (proton donor) is an active-site residue. Mg(2+)-binding residues include Asp247, Glu291, and Asp318. (2R)-2-phosphoglycerate contacts are provided by Lys343, Arg372, Ser373, and Lys394. Lys343 serves as the catalytic Proton acceptor.

The protein belongs to the enolase family. As to quaternary structure, component of the RNA degradosome, a multiprotein complex involved in RNA processing and mRNA degradation. Mg(2+) serves as cofactor.

It localises to the cytoplasm. Its subcellular location is the secreted. The protein localises to the cell surface. It carries out the reaction (2R)-2-phosphoglycerate = phosphoenolpyruvate + H2O. The protein operates within carbohydrate degradation; glycolysis; pyruvate from D-glyceraldehyde 3-phosphate: step 4/5. In terms of biological role, catalyzes the reversible conversion of 2-phosphoglycerate (2-PG) into phosphoenolpyruvate (PEP). It is essential for the degradation of carbohydrates via glycolysis. In Acinetobacter baumannii (strain AYE), this protein is Enolase.